A 150-amino-acid chain; its full sequence is Arginine repressor (150 aa).

It belongs to the ArgR family.

It is found in the cytoplasm. Its pathway is amino-acid biosynthesis; L-arginine biosynthesis [regulation]. Its function is as follows. Regulates arginine biosynthesis genes. This Halothermothrix orenii (strain H 168 / OCM 544 / DSM 9562) protein is Arginine repressor.